A 210-amino-acid polypeptide reads, in one-letter code: Large ribosomal subunit protein uL5 (210 aa).

Residues 188–210 are disordered; sequence AKDDPKKAKTKRGPAYYAKKKKK. Basic residues predominate over residues 195 to 210; the sequence is AKTKRGPAYYAKKKKK.

It belongs to the universal ribosomal protein uL5 family. In terms of assembly, part of the 50S ribosomal subunit; part of the 5S rRNA/L5/L18/L25 subcomplex. Contacts the 5S rRNA and the P site tRNA. Forms a bridge to the 30S subunit in the 70S ribosome.

In terms of biological role, this is one of the proteins that bind and probably mediate the attachment of the 5S RNA into the large ribosomal subunit, where it forms part of the central protuberance. In the 70S ribosome it contacts protein S13 of the 30S subunit (bridge B1b), connecting the 2 subunits; this bridge is implicated in subunit movement. Contacts the P site tRNA; the 5S rRNA and some of its associated proteins might help stabilize positioning of ribosome-bound tRNAs. This is Large ribosomal subunit protein uL5 from Cutibacterium acnes (strain DSM 16379 / KPA171202) (Propionibacterium acnes).